Here is a 945-residue protein sequence, read N- to C-terminus: Isoleucine--tRNA ligase (945 aa).

The short motif at 66-76 is the 'HIGH' region element; the sequence is PYANGDIHLGH. Position 581 (Glu581) interacts with L-isoleucyl-5'-AMP. The 'KMSKS' region signature appears at 622-626; that stretch reads KMSKS. Lys625 is a binding site for ATP. Residues Cys908, Cys911, Cys928, and Cys931 each coordinate Zn(2+).

This sequence belongs to the class-I aminoacyl-tRNA synthetase family. IleS type 1 subfamily. In terms of assembly, monomer. It depends on Zn(2+) as a cofactor.

Its subcellular location is the cytoplasm. It catalyses the reaction tRNA(Ile) + L-isoleucine + ATP = L-isoleucyl-tRNA(Ile) + AMP + diphosphate. Its function is as follows. Catalyzes the attachment of isoleucine to tRNA(Ile). As IleRS can inadvertently accommodate and process structurally similar amino acids such as valine, to avoid such errors it has two additional distinct tRNA(Ile)-dependent editing activities. One activity is designated as 'pretransfer' editing and involves the hydrolysis of activated Val-AMP. The other activity is designated 'posttransfer' editing and involves deacylation of mischarged Val-tRNA(Ile). This is Isoleucine--tRNA ligase from Burkholderia cenocepacia (strain HI2424).